The sequence spans 30 residues: Basic phospholipase A2 CM-I (30 aa).

This sequence belongs to the phospholipase A2 family. Group I subfamily. The cofactor is Ca(2+). As to expression, expressed by the venom gland.

It is found in the secreted. The catalysed reaction is a 1,2-diacyl-sn-glycero-3-phosphocholine + H2O = a 1-acyl-sn-glycero-3-phosphocholine + a fatty acid + H(+). Its function is as follows. Snake venom phospholipase A2 (PLA2) that shows weak anticoagulant activity. Is more catalytically active than the strong anticoagulant protein CM-IV found in this venom. Acts by inhibiting the complex composed of tissue factor (F3) and coagulation factor VIIa (F7) (TF-VIIa complex) by only enzymatic mechanism. PLA2 catalyzes the calcium-dependent hydrolysis of the 2-acyl groups in 3-sn-phosphoglycerides. The protein is Basic phospholipase A2 CM-I of Naja nigricollis (Black-necked spitting cobra).